The sequence spans 263 residues: HTH-type transcriptional repressor NanR (263 aa).

The segment at 1-22 is disordered; that stretch reads MGLMNAFDSQTEDSSPAIGRNL. Residues 30-98 form the HTH gntR-type domain; it reads KKLSEMVEEE…NGERARVSRP (69 aa). A DNA-binding region (H-T-H motif) is located at residues 58–77; sequence ERELMAFFNVGRPSVREALA.

This sequence belongs to the NanR family.

In terms of biological role, transcriptional repressor that controls expression of the genes required for the catabolism of sialic acids. The polypeptide is HTH-type transcriptional repressor NanR (Shigella sonnei (strain Ss046)).